Consider the following 462-residue polypeptide: MKLFIQTLGCAMNERDSAHMIAELRDKKHYTLTNDIKQADLILINTCSVREKPEKKLFSEIGAFAKEKKAGAKIGVCGCTASHLGEEIIKKAPSVDFVLGARNVSKITQVLERPKAVEVDIDYDDSTYVFASSQGMGIKAHLNISIGCDKKCSYCIVPFTRGKEISVPKDLLISEAKKCVASGAKELLLLGQNVNNYGVRFSHSHPKTNFTQLLRALSEIDGLYRIRFTSPHPLHMDDEFLEEFASNPVIAKGIHIPLQSGSSQILKMMRRGYDKQWYLNRIAKLKSLVPNVGIGTDIIVGFPTESEQDFEDTMEVLSLVEFDTLYSFVYSPRPHTSAFEYDKSMLVSPEVAKERLARLQNLHKEILSKKAQLEIGRIHNVLIENHYNGEGQCWSEGRSSSNKLIKILDKKCEIGSIVKVEITHNEGGGLMGRFINELSLSEALASKEYFQNPIYIQEGALC.

Positions 1-116 (MKLFIQTLGC…ITQVLERPKA (116 aa)) constitute an MTTase N-terminal domain. Residues Cys-10, Cys-47, Cys-79, Cys-148, Cys-152, and Cys-155 each coordinate [4Fe-4S] cluster. Positions 134-370 (QGMGIKAHLN…NLHKEILSKK (237 aa)) constitute a Radical SAM core domain. The 65-residue stretch at 372-436 (QLEIGRIHNV…GGGLMGRFIN (65 aa)) folds into the TRAM domain.

Belongs to the methylthiotransferase family. MiaB subfamily. Monomer. Requires [4Fe-4S] cluster as cofactor.

It localises to the cytoplasm. It catalyses the reaction N(6)-dimethylallyladenosine(37) in tRNA + (sulfur carrier)-SH + AH2 + 2 S-adenosyl-L-methionine = 2-methylsulfanyl-N(6)-dimethylallyladenosine(37) in tRNA + (sulfur carrier)-H + 5'-deoxyadenosine + L-methionine + A + S-adenosyl-L-homocysteine + 2 H(+). In terms of biological role, catalyzes the methylthiolation of N6-(dimethylallyl)adenosine (i(6)A), leading to the formation of 2-methylthio-N6-(dimethylallyl)adenosine (ms(2)i(6)A) at position 37 in tRNAs that read codons beginning with uridine. The sequence is that of tRNA-2-methylthio-N(6)-dimethylallyladenosine synthase from Helicobacter hepaticus (strain ATCC 51449 / 3B1).